A 299-amino-acid polypeptide reads, in one-letter code: MPKYLTTLYKRTIKRNIILFKKLGKDFDEKKFILLLIIIAAIPLLISYYLHLTLKSMIIFVVIYVGAALFIPSILYENKIETLENNIPQALYIMILALESGRSINEALLEVVKSNIKEVSDIFRKVLYLMENQKLSFEESMTIVSNLYDSKVLRMLARIMIENRKYGGDLSDSLKILAKTLEDFKMYKRQLLSVTASGLAIGFIILCGVIPAVAALLGAYLIAVSGMLSGVAPIPPVKPEDISKGFEIVQMGTAIIGALFAIPIFGLKIGRMFLISAVTMTIGVLAYYTILKFAPGIFS.

A run of 6 helical transmembrane segments spans residues 32–52 (FILLLIIIAAIPLLISYYLHL), 56–76 (SMIIFVVIYVGAALFIPSILY), 199–219 (LAIGFIILCGVIPAVAALLGA), 220–240 (YLIAVSGMLSGVAPIPPVKPE), 246–266 (FEIVQMGTAIIGALFAIPIFG), and 273–293 (FLISAVTMTIGVLAYYTILKF).

Its subcellular location is the cell membrane. This is an uncharacterized protein from Methanocaldococcus jannaschii (strain ATCC 43067 / DSM 2661 / JAL-1 / JCM 10045 / NBRC 100440) (Methanococcus jannaschii).